The chain runs to 157 residues: Probable succinate transporter subunit YjjB (157 aa).

5 consecutive transmembrane segments (helical) span residues 8 to 28, 34 to 54, 55 to 75, 87 to 107, and 129 to 149; these read LALM…AMVF, ALPW…LMMS, AGFN…SIGI, VFTV…TAMI, and FLKA…PGLW.

This sequence belongs to the ThrE exporter (TC 2.A.79) family. As to quaternary structure, the transporter is composed of YjjB and YjjP.

The protein localises to the cell inner membrane. Functionally, involved in succinate export with YjjP. Both proteins are required for export. The protein is Probable succinate transporter subunit YjjB of Salmonella typhi.